Consider the following 211-residue polypeptide: MGKNPVVIGIAGGSGSGKTSVTRSIYEQFKGHSILMIQQDLYYKDQSHLPFEERLNTNYDHPLAFDNDYLIEHIQDLLNYRPIEKPIYDYKLHTRSEETVHVEPKDVIILEGILVLEDKRLRDLMDIKLYVDTDADLRIIRRIMRDINERGRSIDSVIEQYVSVVRPMHNQFVEPTKRYADIIIPEGGQNHVAIDLMVTKIQTILEQNAIL.

Residue 12–19 (GGSGSGKT) coordinates ATP.

This sequence belongs to the uridine kinase family.

It localises to the cytoplasm. The catalysed reaction is uridine + ATP = UMP + ADP + H(+). It catalyses the reaction cytidine + ATP = CMP + ADP + H(+). It functions in the pathway pyrimidine metabolism; CTP biosynthesis via salvage pathway; CTP from cytidine: step 1/3. Its pathway is pyrimidine metabolism; UMP biosynthesis via salvage pathway; UMP from uridine: step 1/1. In Bacillus subtilis (strain 168), this protein is Uridine kinase (udk).